The following is a 75-amino-acid chain: Putative antitoxin VapB29 (75 aa).

In terms of biological role, possibly the antitoxic component of a type II toxin-antitoxin (TA) system. Its cognate toxin is VapC29 (Potential). This chain is Putative antitoxin VapB29 (vapB29), found in Mycobacterium tuberculosis (strain CDC 1551 / Oshkosh).